The primary structure comprises 961 residues: Glycine dehydrogenase (decarboxylating) (961 aa).

Lysine 709 bears the N6-(pyridoxal phosphate)lysine mark.

Belongs to the GcvP family. The glycine cleavage system is composed of four proteins: P, T, L and H. Pyridoxal 5'-phosphate serves as cofactor.

The catalysed reaction is N(6)-[(R)-lipoyl]-L-lysyl-[glycine-cleavage complex H protein] + glycine + H(+) = N(6)-[(R)-S(8)-aminomethyldihydrolipoyl]-L-lysyl-[glycine-cleavage complex H protein] + CO2. Functionally, the glycine cleavage system catalyzes the degradation of glycine. The P protein binds the alpha-amino group of glycine through its pyridoxal phosphate cofactor; CO(2) is released and the remaining methylamine moiety is then transferred to the lipoamide cofactor of the H protein. The polypeptide is Glycine dehydrogenase (decarboxylating) (Streptomyces avermitilis (strain ATCC 31267 / DSM 46492 / JCM 5070 / NBRC 14893 / NCIMB 12804 / NRRL 8165 / MA-4680)).